The following is a 161-amino-acid chain: Arachidonate 5-lipoxygenase-activating protein (161 aa).

Residues 1–8 lie on the Lumenal side of the membrane; sequence MDQEAVGN. The chain crosses the membrane as a helical span at residues 9 to 30; that stretch reads VVLLALVTLISVVQNAFFAHKV. Residues 31-52 lie on the Cytoplasmic side of the membrane; sequence EHESKAHNGRSFQRTGTLAFER. The helical transmembrane segment at 53–77 threads the bilayer; that stretch reads VYTANQNCVDAYPTFLVVLWTAGLL. Over 78 to 80 the chain is Lumenal; sequence CSQ. The helical transmembrane segment at 81–102 threads the bilayer; the sequence is VPAAFAGLMYLFVRQKYFVGYL. The Cytoplasmic portion of the chain corresponds to 103–107; the sequence is GERTQ. Residues 108–115 lie within the membrane without spanning it; it reads STPGYIFG. Residues 116-128 form a helical membrane-spanning segment; it reads KRIILFLFLMSFA. At 129–161 the chain is on the lumenal side; the sequence is GILNHYLIFFFGSDFENYIRTVSTTISPLLLIP.

Belongs to the MAPEG family. In terms of assembly, homotrimer. Interacts with LTC4S and ALOX5.

The protein localises to the nucleus membrane. It localises to the endoplasmic reticulum membrane. Its function is as follows. Required for leukotriene biosynthesis by ALOX5 (5-lipoxygenase). Anchors ALOX5 to the membrane. Binds arachidonic acid, and could play an essential role in the transfer of arachidonic acid to ALOX5. Binds to MK-886, a compound that blocks the biosynthesis of leukotrienes. The sequence is that of Arachidonate 5-lipoxygenase-activating protein (Alox5ap) from Mus musculus (Mouse).